Here is a 360-residue protein sequence, read N- to C-terminus: Zinc finger protein ztf-2 (360 aa).

Residues 19-41 form a disordered region; it reads LSSPEKEHRRKRRRGEVANPSNT. C2H2-type zinc fingers lie at residues 87-109, 115-138, and 180-203; these read RTCSTCGYQGKWVSEMIRHKRVH, FKCRYCSRTSKWKADLIRHVAKTH, and YRCQLCSFEDERVSVLNSHVSHLH. Residues 248–260 show a composition bias toward low complexity; sequence PLSPCRSESSSDS. A disordered region spans residues 248–272; sequence PLSPCRSESSSDSGIQTDPEEEASI.

Expressed in pharyngeal epithelium/arcade, which connects the pharynx to the mouth.

Transcription factor. Represses gene expression, probably via binding to DNA consensus sequence 5'-[AT][CT]TTCC[AC][AG]-3' in promoter regions. May play a role in pharynx morphogenesis. This chain is Zinc finger protein ztf-2, found in Caenorhabditis elegans.